Here is a 309-residue protein sequence, read N- to C-terminus: Olfactory receptor 10J5 (309 aa).

Residues 1–27 are Extracellular-facing; the sequence is MQRNNFTEVIEFVFLGFSSFGKHQITL. The helical transmembrane segment at 28-48 threads the bilayer; the sequence is FVVFLTIYILTLAGNIIIVTI. The Cytoplasmic segment spans residues 49–57; that stretch reads THIDHHLHT. Residues 58–78 traverse the membrane as a helical segment; sequence PMYFFLSMLASSETVYTLVIV. At 79–84 the chain is on the extracellular side; the sequence is PRMLSS. A helical transmembrane segment spans residues 85–105; sequence LIFYNLPISLAGCATQMFFFV. Cys97 and Cys178 are oxidised to a cystine. At 106 to 131 the chain is on the cytoplasmic side; that stretch reads TLATNNCFLLTAMGYDRYVAICNPLR. Residues 132 to 152 traverse the membrane as a helical segment; the sequence is YTIIMSKGMCALLVCGSLGTG. The Extracellular portion of the chain corresponds to 153–203; the sequence is LVMAVLHVPAMFHLPFCGTVVEHFFCDIYPVMKLSCVDTTVNEIINYGVSS. The helical transmembrane segment at 204-224 threads the bilayer; sequence FVILVPIGLIFISYVLIVSSI. Topologically, residues 225–235 are cytoplasmic; that stretch reads LKIVSTEGQKK. Residues 236 to 256 traverse the membrane as a helical segment; sequence AFATCASHLTVVIVHYGCASI. The Extracellular portion of the chain corresponds to 257–270; the sequence is AYLKPKSESSVEKD. The chain crosses the membrane as a helical span at residues 271–291; the sequence is LLLSVTYTIITPLLNPVVYSL. Residues 292–309 lie on the Cytoplasmic side of the membrane; that stretch reads RNKEVKDALCRAVGRNTS.

Belongs to the G-protein coupled receptor 1 family. In terms of tissue distribution, expressed in the olfactory epithelium as well as in the testis. Expressed in round spermatids during stages VI-VIII of spermatogenesis.

It localises to the cell membrane. In terms of biological role, olfactory receptor. Activated by the synthetic floral odorant, lyral, and by alpha-cedrene, a sesquiterpene constituent of cedarwood oil. Its activation increases intracellular Ca(2+). Acts as a key regulator of myogenesis through its actions on cell migration and adhesion by activating the Ca(2+)-dependent AKT signal transduction pathway. Also acts as a regulator of angiogenesis. Moreover, plays a role in the regulation of lipid accumulation in hepatocytes via the cAMP-PKA pathway. Involved in sperm chemotaxis and motility. The polypeptide is Olfactory receptor 10J5 (Mus musculus (Mouse)).